A 320-amino-acid chain; its full sequence is ATP-dependent 6-phosphofructokinase (320 aa).

Gly12 is an ATP binding site. ADP is bound at residue 22 to 26 (RGVVR). ATP is bound by residues 73 to 74 (RF) and 103 to 106 (GDGS). Asp104 contacts Mg(2+). A substrate-binding site is contributed by 126–128 (TID). Catalysis depends on Asp128, which acts as the Proton acceptor. Arg155 is a binding site for ADP. Substrate-binding positions include Arg163 and 170–172 (MGR). ADP is bound by residues 186-188 (GCE), Lys212, and 214-216 (KKH). Residues Glu223, Arg244, and 250–253 (HIQR) each bind substrate.

Belongs to the phosphofructokinase type A (PFKA) family. ATP-dependent PFK group I subfamily. Prokaryotic clade 'B1' sub-subfamily. Homotetramer. Mg(2+) serves as cofactor.

The protein resides in the cytoplasm. It catalyses the reaction beta-D-fructose 6-phosphate + ATP = beta-D-fructose 1,6-bisphosphate + ADP + H(+). Its pathway is carbohydrate degradation; glycolysis; D-glyceraldehyde 3-phosphate and glycerone phosphate from D-glucose: step 3/4. Its activity is regulated as follows. Allosterically activated by ADP and other diphosphonucleosides, and allosterically inhibited by phosphoenolpyruvate. Functionally, catalyzes the phosphorylation of D-fructose 6-phosphate to fructose 1,6-bisphosphate by ATP, the first committing step of glycolysis. The protein is ATP-dependent 6-phosphofructokinase of Aliivibrio fischeri (strain ATCC 700601 / ES114) (Vibrio fischeri).